The primary structure comprises 444 residues: Divalent metal cation transporter MntH (444 aa).

11 helical membrane passes run leucine 39 to alanine 59, glycine 69 to leucine 89, phenylalanine 109 to threonine 128, leucine 146 to glutamate 166, leucine 175 to alanine 195, threonine 215 to leucine 235, valine 264 to serine 284, threonine 304 to isoleucine 324, isoleucine 346 to glycine 366, alanine 372 to isoleucine 392, and alanine 417 to isoleucine 437.

Belongs to the NRAMP family.

Its subcellular location is the cell inner membrane. Functionally, h(+)-stimulated, divalent metal cation uptake system. In Granulibacter bethesdensis (strain ATCC BAA-1260 / CGDNIH1), this protein is Divalent metal cation transporter MntH.